The following is a 117-amino-acid chain: uncharacterized protein (117 aa).

This is an uncharacterized protein from Rattus norvegicus (Rat).